The primary structure comprises 359 residues: MTTTLQQRSGASSWQAFCEWVTSTNNRLYVGWFGVLMIPTLLAATICFVIAFVAAPPVDIDGIREPVAGSLIYGNNIISGAVVPSSNAIGLHFYPIWEAASLDEWLYNGGPFQLVVFHFLIGIYAYMGREWELSYRLGMRPWICVAYSAPVAAASAVFLVYPFGQGSFSDAMPLGISGTFNYMLVFQAEHNILMHPFHMLGVAGVFGGSLFSAMHGSLVTSSLVRETTETESQNYGYKFGQEEETYNIVAAHGYFGRLIFQYASFNNSRSLHFFLAAWPVVGIWFTALGVSTMAFNLNGFNFNQSILDGQGRVLNTWADVLNRAGLGMEVMHERNAHNFPLDLAAAESTPVALQAPAIG.

Transmembrane regions (helical) follow at residues 29-46 (YVGW…AATI), 118-133 (HFLI…EWEL), and 142-156 (WICV…AASA). His118 is a chlorophyll a binding site. Tyr126 is a binding site for pheophytin a. [CaMn4O5] cluster-binding residues include Asp170 and Glu189. Residues 197 to 218 (FHMLGVAGVFGGSLFSAMHGSL) traverse the membrane as a helical segment. His198 contacts chlorophyll a. A quinone is bound by residues His215 and 264–265 (SF). His215 is a binding site for Fe cation. Fe cation is bound at residue His272. A helical transmembrane segment spans residues 274 to 288 (FLAAWPVVGIWFTAL). 4 residues coordinate [CaMn4O5] cluster: His332, Glu333, Asp342, and Ala344. A propeptide spanning residues 345 to 359 (AAESTPVALQAPAIG) is cleaved from the precursor.

The protein belongs to the reaction center PufL/M/PsbA/D family. In terms of assembly, PSII is composed of 1 copy each of membrane proteins PsbA, PsbB, PsbC, PsbD, PsbE, PsbF, PsbH, PsbI, PsbJ, PsbK, PsbL, PsbM, PsbT, PsbX, PsbY, PsbZ, Psb30/Ycf12, peripheral proteins PsbO, CyanoQ (PsbQ), PsbU, PsbV and a large number of cofactors. It forms dimeric complexes. The D1/D2 heterodimer binds P680, chlorophylls that are the primary electron donor of PSII, and subsequent electron acceptors. It shares a non-heme iron and each subunit binds pheophytin, quinone, additional chlorophylls, carotenoids and lipids. D1 provides most of the ligands for the Mn4-Ca-O5 cluster of the oxygen-evolving complex (OEC). There is also a Cl(-1) ion associated with D1 and D2, which is required for oxygen evolution. The PSII complex binds additional chlorophylls, carotenoids and specific lipids. serves as cofactor. In terms of processing, tyr-161 forms a radical intermediate that is referred to as redox-active TyrZ, YZ or Y-Z. C-terminally processed by CtpA; processing is essential to allow assembly of the oxygen-evolving complex and thus photosynthetic growth.

Its subcellular location is the cellular thylakoid membrane. It carries out the reaction 2 a plastoquinone + 4 hnu + 2 H2O = 2 a plastoquinol + O2. Photosystem II (PSII) is a light-driven water:plastoquinone oxidoreductase that uses light energy to abstract electrons from H(2)O, generating O(2) and a proton gradient subsequently used for ATP formation. It consists of a core antenna complex that captures photons, and an electron transfer chain that converts photonic excitation into a charge separation. The D1/D2 (PsbA/PsbD) reaction center heterodimer binds P680, the primary electron donor of PSII as well as several subsequent electron acceptors. The chain is Photosystem II protein D1 1 from Parasynechococcus marenigrum (strain WH8102).